We begin with the raw amino-acid sequence, 77 residues long: MARVCDVTGKGPMVGNNVSHANNKTKRRFLPNLQYRRFWVETENRWVRLRVSSAALRLIDKNGIDAVLADLRARGQA.

This sequence belongs to the bacterial ribosomal protein bL28 family.

This Variovorax paradoxus (strain S110) protein is Large ribosomal subunit protein bL28.